Consider the following 110-residue polypeptide: Chloride intracellular channel protein 1 (110 aa).

At Ala-2 the chain carries N-acetylalanine. Residues 2-90 (AEEQPQVELF…EEFLEAVLCP (89 aa)) are required for insertion into the membrane. The residue at position 13 (Lys-13) is an N6-acetyllysine. Positions 24–27 (CPFS) match the G-site motif. Cys-24 and Cys-59 are joined by a disulfide. A helical membrane pass occupies residues 26 to 46 (FSQRLFMVLWLKGVTFNVTTV).

It belongs to the chloride channel CLIC family. Monomer. Homodimer (in vitro). Interacts with TRAPPC2. Dimerization requires a conformation change that leads to the exposure of a large hydrophobic surface. In vivo, this may lead to membrane insertion.

The protein localises to the nucleus. The protein resides in the nucleus membrane. It is found in the cytoplasm. Its subcellular location is the cell membrane. It localises to the endoplasmic reticulum. The catalysed reaction is L-dehydroascorbate + 2 glutathione = glutathione disulfide + L-ascorbate. It carries out the reaction chloride(in) = chloride(out). The enzyme catalyses iodide(out) = iodide(in). It catalyses the reaction thiocyanate(in) = thiocyanate(out). The catalysed reaction is nitrate(in) = nitrate(out). It carries out the reaction bromide(in) = bromide(out). The enzyme catalyses fluoride(in) = fluoride(out). In terms of biological role, in the soluble state, catalyzes glutaredoxin-like thiol disulfide exchange reactions with reduced glutathione as electron donor. Reduces selenite and dehydroascorbate and may act as an antioxidant during oxidative stress response. Can insert into membranes and form voltage-dependent multi-ion conductive channels. Membrane insertion seems to be redox-regulated and may occur only under oxidizing conditions. Involved in regulation of the cell cycle. The polypeptide is Chloride intracellular channel protein 1 (CLIC1) (Sus scrofa (Pig)).